A 357-amino-acid polypeptide reads, in one-letter code: Red-sensitive opsin (357 aa).

Residues 1-49 lie on the Extracellular side of the membrane; sequence MAEQWGKQVFAARRQNEDTTRGSAFTYTNSNHTRDPFEGPNYHIAPRWV. Asparagine 31 carries N-linked (GlcNAc...) asparagine glycosylation. Residues 50–74 form a helical membrane-spanning segment; the sequence is YNLATLWMFFVVVLSVFTNGLVLVA. The Cytoplasmic portion of the chain corresponds to 75-86; that stretch reads TAKFKKLRHPLN. The helical transmembrane segment at 87-112 threads the bilayer; sequence WILSNLAIADLGETVFASTISVCNQF. Residues 113-126 lie on the Extracellular side of the membrane; sequence FGYFILGHPMCVFE. Cysteine 123 and cysteine 200 form a disulfide bridge. The helical transmembrane segment at 127-146 threads the bilayer; that stretch reads GYVVSTCGIAALWSLTIISW. Topologically, residues 147 to 165 are cytoplasmic; that stretch reads ERWVVVCKPFGNVKFDAKW. Residues 166 to 189 traverse the membrane as a helical segment; it reads AIGGIVFSWVWSAVWCAPPVFGWS. Residues 190-215 lie on the Extracellular side of the membrane; the sequence is RYWPHGLKTSCGPDVFSGSDDPGVQS. The helical transmembrane segment at 216–243 threads the bilayer; it reads YMIVLMITCCIIPLAIIILCYLAVWLAI. Over 244–265 the chain is Cytoplasmic; that stretch reads RAVAMQQKESESTQKAEREVSR. A helical membrane pass occupies residues 266–289; the sequence is MVVVMIVAYCVCWGPYTFFACFAA. Residues 290 to 297 lie on the Extracellular side of the membrane; that stretch reads ANPGYAFH. Residues 298–322 traverse the membrane as a helical segment; the sequence is PLAAAMPAYFAKSATIYNPVIYVFM. Lysine 309 bears the N6-(retinylidene)lysine mark. Residues 323–357 lie on the Cytoplasmic side of the membrane; it reads NRQFRTCIMQLFGKQVDDGSEVSTSKTEVSSVAPA.

It belongs to the G-protein coupled receptor 1 family. Opsin subfamily. In terms of processing, phosphorylated on some or all of the serine and threonine residues present in the C-terminal region. In terms of tissue distribution, the color pigments are found in the cone photoreceptor cells.

It localises to the membrane. Visual pigments are the light-absorbing molecules that mediate vision. They consist of an apoprotein, opsin, covalently linked to cis-retinal. The sequence is that of Red-sensitive opsin from Oryzias latipes (Japanese rice fish).